A 380-amino-acid chain; its full sequence is Epoxyqueuosine reductase (380 aa).

Residue Asp-134 is the Proton donor of the active site. The 4Fe-4S ferredoxin-type 1 domain occupies 178-208 (FPPDKPIEDQCGGCTKCIDICPTGALIQGGQ). [4Fe-4S] cluster is bound by residues Cys-188, Cys-191, Cys-194, Cys-198, Cys-214, Cys-240, Cys-243, and Cys-247. The 4Fe-4S ferredoxin-type 2 domain maps to 226-258 (PEEYRDKIGNRIYGCDTCQTVCPKNKGMDFHNH).

This sequence belongs to the QueG family. As to quaternary structure, monomer. The cofactor is cob(II)alamin. Requires [4Fe-4S] cluster as cofactor.

It localises to the cytoplasm. The enzyme catalyses epoxyqueuosine(34) in tRNA + AH2 = queuosine(34) in tRNA + A + H2O. Its pathway is tRNA modification; tRNA-queuosine biosynthesis. Functionally, catalyzes the conversion of epoxyqueuosine (oQ) to queuosine (Q), which is a hypermodified base found in the wobble positions of tRNA(Asp), tRNA(Asn), tRNA(His) and tRNA(Tyr). This is Epoxyqueuosine reductase from Bacillus cereus (strain ATCC 14579 / DSM 31 / CCUG 7414 / JCM 2152 / NBRC 15305 / NCIMB 9373 / NCTC 2599 / NRRL B-3711).